The sequence spans 2346 residues: Acetyl-CoA carboxylase 1 (2346 aa).

Methionine 1 is modified (N-acetylmethionine). 8 positions are modified to phosphoserine: serine 5, serine 23, serine 25, serine 29, serine 34, serine 48, serine 50, and serine 53. Residue threonine 58 is modified to Phosphothreonine. The residue at position 78 (serine 78) is a Phosphoserine. Serine 80 is subject to Phosphoserine; by AMPK. The Biotin carboxylation domain maps to 117–618; the sequence is VIEKVLIANN…GTGWLDRLIA (502 aa). The ATP-grasp domain maps to 275-466; sequence SKRILNVPQE…LPAAQLQIAM (192 aa). 315-320 provides a ligand contact to ATP; it reads GGGGKG. 3 residues coordinate Mg(2+): glutamate 424, glutamate 437, and asparagine 439. 3 residues coordinate Mn(2+): glutamate 424, glutamate 437, and asparagine 439. Arginine 441 is a catalytic residue. Position 610 is a phosphothreonine (threonine 610). Positions 745-819 constitute a Biotinyl-binding domain; it reads FEKENDPSVL…DPGCVIAKMQ (75 aa). Position 786 is an N6-biotinyllysine (lysine 786). Residues serine 835, serine 1201, serine 1216, and serine 1218 each carry the phosphoserine modification. Position 1227 is a phosphothreonine (threonine 1227). A phosphoserine mark is found at serine 1259, serine 1263, and serine 1273. An N6-acetyllysine modification is found at lysine 1334. In terms of domain architecture, CoA carboxyltransferase N-terminal spans 1576 to 1914; sequence PYVTKDQLQS…SVYSSVPLLN (339 aa). Residues 1576-2234 are carboxyltransferase; that stretch reads PYVTKDQLQS…EDLVKKKIHN (659 aa). The CoA site is built by arginine 1823, lysine 2127, and arginine 2129. The CoA carboxyltransferase C-terminal domain maps to 1918 to 2234; sequence PIDRVIEFVP…EDLVKKKIHN (317 aa). Threonine 2153 carries the post-translational modification Phosphothreonine.

Monomer, homodimer, and homotetramer. Can form filamentous polymers. Interacts in its inactive phosphorylated form with the BRCT domains of BRCA1 which prevents ACACA dephosphorylation and inhibits lipid synthesis. Interacts with MID1IP1; interaction with MID1IP1 promotes oligomerization and increases its activity. It depends on Mg(2+) as a cofactor. Mn(2+) serves as cofactor. The cofactor is biotin. Phosphorylation on Ser-1263 is required for interaction with BRCA1. Post-translationally, phosphorylation at Ser-80 by AMPK inactivates enzyme activity. In terms of processing, the biotin cofactor is covalently attached to the central biotinyl-binding domain and is required for the catalytic activity.

It localises to the cytoplasm. Its subcellular location is the cytosol. The enzyme catalyses hydrogencarbonate + acetyl-CoA + ATP = malonyl-CoA + ADP + phosphate + H(+). The protein operates within lipid metabolism; malonyl-CoA biosynthesis; malonyl-CoA from acetyl-CoA: step 1/1. Its activity is regulated as follows. Inhibited by phosphorylation. Citrate promotes oligomerization of the protein into filaments that correspond to the most active form of the carboxylase. Functionally, cytosolic enzyme that catalyzes the carboxylation of acetyl-CoA to malonyl-CoA, the first and rate-limiting step of de novo fatty acid biosynthesis. This is a 2 steps reaction starting with the ATP-dependent carboxylation of the biotin carried by the biotin carboxyl carrier (BCC) domain followed by the transfer of the carboxyl group from carboxylated biotin to acetyl-CoA. This is Acetyl-CoA carboxylase 1 from Bos taurus (Bovine).